We begin with the raw amino-acid sequence, 97 residues long: Homeobox protein HD-9 (97 aa).

A DNA-binding region (homeobox) is located at residues Met-6 to Cys-65.

It localises to the nucleus. The chain is Homeobox protein HD-9 (HD-9) from Encephalitozoon cuniculi (strain GB-M1) (Microsporidian parasite).